The chain runs to 176 residues: Transcription factor E (176 aa).

Residues 8-90 (NDPVIQKYLH…LWTFHYENIP (83 aa)) enclose the HTH TFE/IIEalpha-type domain.

Belongs to the TFE family. In terms of assembly, monomer. Interaction with RNA polymerase subunits RpoF and RpoE is necessary for Tfe stimulatory transcription activity. Able to interact with Tbp and RNA polymerase in the absence of DNA promoter. Interacts both with the preinitiation and elongation complexes.

Functionally, transcription factor that plays a role in the activation of archaeal genes transcribed by RNA polymerase. Facilitates transcription initiation by enhancing TATA-box recognition by TATA-box-binding protein (Tbp), and transcription factor B (Tfb) and RNA polymerase recruitment. Not absolutely required for transcription in vitro, but particularly important in cases where Tbp or Tfb function is not optimal. It dynamically alters the nucleic acid-binding properties of RNA polymerases by stabilizing the initiation complex and destabilizing elongation complexes. Seems to translocate with the RNA polymerase following initiation and acts by binding to the non template strand of the transcription bubble in elongation complexes. The sequence is that of Transcription factor E from Haloquadratum walsbyi (strain DSM 16790 / HBSQ001).